Here is a 181-residue protein sequence, read N- to C-terminus: Oligoribonuclease (181 aa).

In terms of domain architecture, Exonuclease spans 8-171 (LIWIDLEMTG…QDIQESIAEL (164 aa)). Tyrosine 129 is a catalytic residue.

The protein belongs to the oligoribonuclease family.

The protein localises to the cytoplasm. 3'-to-5' exoribonuclease specific for small oligoribonucleotides. The protein is Oligoribonuclease of Shewanella sp. (strain MR-4).